Here is a 650-residue protein sequence, read N- to C-terminus: FAS-associated factor 1 (650 aa).

The 57-residue stretch at 1 to 57 (MASNMDREMILADFQACTGIENIDEAITLLEQNNWDLVAAINGVIPQENGILQSEYG) folds into the UBA domain. The segment at 62–87 (PGPAFNPASHPASAPTSSSSSAFRPV) is disordered. Low complexity predominate over residues 68-83 (PASHPASAPTSSSSSA). A Phosphoserine modification is found at S320. Positions 569–646 (NAEPVSKLRI…KLFPQETLFL (78 aa)) constitute a UBX domain. Position 580 is a phosphothreonine (T580). Phosphoserine is present on S582.

In terms of assembly, interacts with CDT1 and ATPase VCP/p97. Interacts (via UBA domain) with FAS (via death domain). Interacts (via UBA domain) with NLRP12 (via DAPIN/PYRIN domain). Most abundant in testis, slightly less abundant in skeletal muscle and heart, followed by prostate, thymus, ovary, small intestine, and colon. Not detected in the peripheral blood leukocytes.

It localises to the nucleus. Functionally, ubiquitin-binding protein. Required for the progression of DNA replication forks by targeting DNA replication licensing factor CDT1 for degradation. Potentiates but cannot initiate FAS-induced apoptosis. This Homo sapiens (Human) protein is FAS-associated factor 1 (FAF1).